A 113-amino-acid chain; its full sequence is Histone H2B (113 aa).

Positions 1-21 (MPATPAKRAKRVQQEKRHHKK) are disordered. The span at 7–21 (KRAKRVQQEKRHHKK) shows a compositional bias: basic residues. A Glycyl lysine isopeptide (Lys-Gly) (interchain with G-Cter in ubiquitin) cross-link involves residue K109.

This sequence belongs to the histone H2B family. The nucleosome is a histone octamer containing two molecules each of H2A, H2B, H3 and H4 assembled in one H3-H4 heterotetramer and two H2A-H2B heterodimers. The octamer wraps approximately 147 bp of DNA. Monoubiquitination of Lys-109 gives a specific tag for epigenetic transcriptional activation and is also prerequisite for histone H3 'Lys-4' and 'Lys-79' methylation.

The protein localises to the nucleus. Its subcellular location is the chromosome. Functionally, core component of nucleosome. Nucleosomes wrap and compact DNA into chromatin, limiting DNA accessibility to the cellular machineries which require DNA as a template. Histones thereby play a central role in transcription regulation, DNA repair, DNA replication and chromosomal stability. DNA accessibility is regulated via a complex set of post-translational modifications of histones, also called histone code, and nucleosome remodeling. The sequence is that of Histone H2B (H2B1) from Euplotes crassus.